A 312-amino-acid polypeptide reads, in one-letter code: Porphobilinogen deaminase (312 aa).

Residue Cys241 is modified to S-(dipyrrolylmethanemethyl)cysteine.

The protein belongs to the HMBS family. In terms of assembly, monomer. Dipyrromethane is required as a cofactor.

It catalyses the reaction 4 porphobilinogen + H2O = hydroxymethylbilane + 4 NH4(+). Its pathway is porphyrin-containing compound metabolism; protoporphyrin-IX biosynthesis; coproporphyrinogen-III from 5-aminolevulinate: step 2/4. It functions in the pathway porphyrin-containing compound metabolism; chlorophyll biosynthesis. In terms of biological role, tetrapolymerization of the monopyrrole PBG into the hydroxymethylbilane pre-uroporphyrinogen in several discrete steps. The chain is Porphobilinogen deaminase from Prosthecochloris aestuarii (strain DSM 271 / SK 413).